Here is a 337-residue protein sequence, read N- to C-terminus: Glyceraldehyde-3-phosphate dehydrogenase (337 aa).

NAD(+) is bound by residues 12 to 13, Asp34, and Arg79; that span reads RI. D-glyceraldehyde 3-phosphate is bound by residues 150–152, Thr181, 210–211, and Arg233; these read SCT and TG. Cys151 serves as the catalytic Nucleophile. Asn315 serves as a coordination point for NAD(+).

Belongs to the glyceraldehyde-3-phosphate dehydrogenase family. In terms of assembly, homotetramer.

It is found in the cytoplasm. The enzyme catalyses D-glyceraldehyde 3-phosphate + phosphate + NAD(+) = (2R)-3-phospho-glyceroyl phosphate + NADH + H(+). The protein operates within carbohydrate degradation; glycolysis; pyruvate from D-glyceraldehyde 3-phosphate: step 1/5. The sequence is that of Glyceraldehyde-3-phosphate dehydrogenase (GPD) from Podospora anserina (Pleurage anserina).